Consider the following 155-residue polypeptide: Ribosomal RNA large subunit methyltransferase H (155 aa).

S-adenosyl-L-methionine is bound by residues Leu-73, Gly-104, and 123–128 (LSPLTL).

This sequence belongs to the RNA methyltransferase RlmH family. In terms of assembly, homodimer.

It is found in the cytoplasm. It catalyses the reaction pseudouridine(1915) in 23S rRNA + S-adenosyl-L-methionine = N(3)-methylpseudouridine(1915) in 23S rRNA + S-adenosyl-L-homocysteine + H(+). Functionally, specifically methylates the pseudouridine at position 1915 (m3Psi1915) in 23S rRNA. The polypeptide is Ribosomal RNA large subunit methyltransferase H (Ectopseudomonas mendocina (strain ymp) (Pseudomonas mendocina)).